We begin with the raw amino-acid sequence, 294 residues long: 4-diphosphocytidyl-2-C-methyl-D-erythritol kinase (294 aa).

The active site involves Lys11. Residue 93–103 (PFGAGLGGGSS) coordinates ATP. The active site involves Asp135.

It belongs to the GHMP kinase family. IspE subfamily.

The catalysed reaction is 4-CDP-2-C-methyl-D-erythritol + ATP = 4-CDP-2-C-methyl-D-erythritol 2-phosphate + ADP + H(+). The protein operates within isoprenoid biosynthesis; isopentenyl diphosphate biosynthesis via DXP pathway; isopentenyl diphosphate from 1-deoxy-D-xylulose 5-phosphate: step 3/6. In terms of biological role, catalyzes the phosphorylation of the position 2 hydroxy group of 4-diphosphocytidyl-2C-methyl-D-erythritol. The protein is 4-diphosphocytidyl-2-C-methyl-D-erythritol kinase of Chlorobium phaeobacteroides (strain DSM 266 / SMG 266 / 2430).